The chain runs to 155 residues: Ciliary microtubule inner protein 2C (155 aa).

The protein belongs to the CIMIP2 family.

The protein resides in the cytoplasm. It localises to the cytoskeleton. It is found in the cilium axoneme. Its function is as follows. Microtubule inner protein (MIP) part of the dynein-decorated doublet microtubules (DMTs) in cilia axoneme, which is required for motile cilia beating. In Xenopus laevis (African clawed frog), this protein is Ciliary microtubule inner protein 2C (cimip2cb).